The primary structure comprises 436 residues: Ribulose bisphosphate carboxylase large chain (436 aa).

2 residues coordinate substrate: Asn-104 and Thr-154. Lys-156 acts as the Proton acceptor in catalysis. Residue Lys-158 participates in substrate binding. Residues Lys-182, Asp-184, and Glu-185 each contribute to the Mg(2+) site. Lys-182 carries the post-translational modification N6-carboxylysine. His-275 functions as the Proton acceptor in the catalytic mechanism. Substrate contacts are provided by Arg-276, His-308, and Ser-360.

It belongs to the RuBisCO large chain family. Type I subfamily. Heterohexadecamer of 8 large chains and 8 small chains; disulfide-linked. The disulfide link is formed within the large subunit homodimers. Requires Mg(2+) as cofactor. The disulfide bond which can form in the large chain dimeric partners within the hexadecamer appears to be associated with oxidative stress and protein turnover.

It is found in the plastid. The protein localises to the chloroplast. The catalysed reaction is 2 (2R)-3-phosphoglycerate + 2 H(+) = D-ribulose 1,5-bisphosphate + CO2 + H2O. It catalyses the reaction D-ribulose 1,5-bisphosphate + O2 = 2-phosphoglycolate + (2R)-3-phosphoglycerate + 2 H(+). In terms of biological role, ruBisCO catalyzes two reactions: the carboxylation of D-ribulose 1,5-bisphosphate, the primary event in carbon dioxide fixation, as well as the oxidative fragmentation of the pentose substrate in the photorespiration process. Both reactions occur simultaneously and in competition at the same active site. The sequence is that of Ribulose bisphosphate carboxylase large chain from Euglena anabaena (Euglenaria anabaena).